The chain runs to 89 residues: Small ribosomal subunit protein uS15 (89 aa).

This sequence belongs to the universal ribosomal protein uS15 family. As to quaternary structure, part of the 30S ribosomal subunit. Forms a bridge to the 50S subunit in the 70S ribosome, contacting the 23S rRNA.

Functionally, one of the primary rRNA binding proteins, it binds directly to 16S rRNA where it helps nucleate assembly of the platform of the 30S subunit by binding and bridging several RNA helices of the 16S rRNA. Forms an intersubunit bridge (bridge B4) with the 23S rRNA of the 50S subunit in the ribosome. This is Small ribosomal subunit protein uS15 from Kineococcus radiotolerans (strain ATCC BAA-149 / DSM 14245 / SRS30216).